Reading from the N-terminus, the 1171-residue chain is Topoisomerase 1-associated factor 1 (1171 aa).

Disordered regions lie at residues 568-592 and 880-1171; these read RRKQ…DSDT and PAED…DSDS. Over residues 887–910 the composition is skewed to basic and acidic residues; that stretch reads VDPRDLMRRKRTAADTDSSRHEFT. Residues 938-950 show a composition bias toward basic residues; sequence ALKTLKQRRRRRR. Residues 954–964 show a composition bias toward acidic residues; sequence DAEESGPDEAV. The span at 965–993 shows a compositional bias: basic and acidic residues; the sequence is LEARRTAREKNALERQRKIKSDLYVHASD. Residues 1033 to 1048 show a composition bias toward basic residues; the sequence is TKKKSKASAGRKRKVK. Over residues 1085–1100 the composition is skewed to polar residues; sequence GSTSPRRSQTPPTSAD.

It belongs to the timeless family. As to quaternary structure, component of the fork protection complex (FPC) consisting of TOF1 and CSM3.

It is found in the nucleus. Its function is as follows. Forms a fork protection complex (FPC) with CSM3 and which is required for chromosome segregation during meiosis and DNA damage repair. FPC coordinates leading and lagging strand synthesis and moves with the replication fork. FPC stabilizes replication forks in a configuration that is recognized by replication checkpoint sensors. In Coccidioides immitis (strain RS) (Valley fever fungus), this protein is Topoisomerase 1-associated factor 1 (TOF1).